We begin with the raw amino-acid sequence, 1481 residues long: Cystic fibrosis transmembrane conductance regulator (1481 aa).

Residues 1-77 (MQRSPLEKAS…KLINALRRCF (77 aa)) are Cytoplasmic-facing. A helical membrane pass occupies residues 78–98 (FWRFMFYGILLYLGEVTKAVQ). The ABC transmembrane type-1 1 domain occupies 81–365 (FMFYGILLYL…WAVQTWYDSL (285 aa)). The Extracellular portion of the chain corresponds to 99–122 (PLLLGRIIASYDPDNKEERSIAIY). Residues 123 to 146 (LGIGLCLLFIVRTLLLHPAIFGLH) traverse the membrane as a helical segment. The Cytoplasmic segment spans residues 147–195 (HIGMQMRIAMFSLIYKKTLKLSSRVLDKISIGQLVSLLSNNLNKFDEGL). The chain crosses the membrane as a helical span at residues 196–216 (ALAHFVWIVPLQVALLMGLIW). Over 217–222 (ELLQAS) the chain is Extracellular. Residues 223–243 (AFCGLGFLIVLALFQAGLGRM) traverse the membrane as a helical segment. Residues 244–298 (MMKYRDQRAGKINERLVITSEMIENIQSVKAYCWEEAMEKMIENLRQTELKLTRK) lie on the Cytoplasmic side of the membrane. The helical transmembrane segment at 299–319 (AAYVRYFNSSAFFFSGFFVVF) threads the bilayer. Residues 320–339 (LSVLPYALIKGIVLRKIFTT) are Extracellular-facing. The helical transmembrane segment at 340 to 358 (ISFCIVLRMAVTRQFPWAV) threads the bilayer. Residues 359 to 858 (QTWYDSLGAI…YLRYITVHKS (500 aa)) are Cytoplasmic-facing. ATP contacts are provided by residues tryptophan 401, serine 434, 458–465 (GSTGAGKT), and glutamine 493. Residues 423-646 (NDDDSLFFSN…RPDFSSKLMG (224 aa)) enclose the ABC transporter 1 domain. Cysteine 524 carries S-palmitoyl cysteine lipidation. Serine 549 and serine 660 each carry phosphoserine. Positions 654 to 831 (SAERRNSILT…EEINEEDLKE (178 aa)) are disordered R region. Serine 670 carries the phosphoserine; by PKA modification. A Phosphoserine modification is found at serine 686. A Glycyl lysine isopeptide (Lys-Gly) (interchain with G-Cter in ubiquitin) cross-link involves residue lysine 688. Phosphoserine is present on residues serine 700 and serine 712. Threonine 717 carries the phosphothreonine modification. Phosphoserine occurs at positions 737, 753, 768, 790, 795, and 813. Residues 859–879 (LIFVLIWCLVIFLAEVAASLV) form a helical membrane-spanning segment. Residues 859 to 1155 (LIFVLIWCLV…AVNSSIDVDS (297 aa)) enclose the ABC transmembrane type-1 2 domain. Residues 880 to 918 (VLWFLGNTPPQDKGNSTYSRNNSYAVIITRTSSYYVFYI) are Extracellular-facing. Asparagine 894 and asparagine 900 each carry an N-linked (GlcNAc...) asparagine glycan. Residues 919-939 (YVGVADTLLAMGFFRGLPLVH) form a discontinuously helical membrane-spanning segment. The Cytoplasmic portion of the chain corresponds to 940–990 (TLITVSKILHHKMLHSVLQAPMSTLNTLKAGGILNRFSKDIAILDDLLPLT). Residues 991 to 1011 (IFDFIQLLLIVIGAIAVVAVL) traverse the membrane as a helical segment. Residues 1012-1013 (QP) are Extracellular-facing. A helical membrane pass occupies residues 1014 to 1034 (YIFVATVPVIVAFIMLRAYFL). Over 1035–1095 (QTSQQLKQLE…TANWFLYLST (61 aa)) the chain is Cytoplasmic. Residues 1096–1116 (LRWFQMRIEMIFVIFFIAVTF) traverse the membrane as a helical segment. Residues 1117–1130 (ISILTTGEGEGTVG) lie on the Extracellular side of the membrane. Residues 1131 to 1151 (IILTLAMNIMSTLQWAVNSSI) traverse the membrane as a helical segment. At 1152–1481 (DVDSLMRSVS…TEEEVQDTRL (330 aa)) the chain is on the cytoplasmic side. Residues 1211-1444 (MTVKDLTAKY…RSLFRQAISP (234 aa)) enclose the ABC transporter 2 domain. Residues tyrosine 1220 and 1245-1252 (GRTGSGKS) contribute to the ATP site. An interaction with GORASP2 region spans residues 1387 to 1481 (RTLKQAFADC…TEEEVQDTRL (95 aa)). Cysteine 1396 carries S-palmitoyl cysteine lipidation. Residues serine 1445 and serine 1457 each carry the phosphoserine modification. A disordered region spans residues 1462-1481 (QPQIAALKEETEEEVQDTRL). Residues 1471–1481 (ETEEEVQDTRL) show a composition bias toward acidic residues. A PDZ-binding motif is present at residues 1479–1481 (TRL).

The protein belongs to the ABC transporter superfamily. ABCC family. CFTR transporter (TC 3.A.1.202) subfamily. In terms of assembly, monomer; does not require oligomerization for channel activity. May form oligomers in the membrane. Interacts with SLC26A3, SLC26A6 and NHERF1. Interacts with SHANK2. Interacts with MYO6. Interacts (via C-terminus) with GOPC (via PDZ domain); this promotes CFTR internalization and thereby decreases channel activity. Interacts with SLC4A7 through NHERF1. Found in a complex with MYO5B and RAB11A. Interacts with ANO1. Interacts with SLC26A8. Interacts with AHCYL1; the interaction increases CFTR activity. Interacts with CSE1L. The core-glycosylated form interacts with GORASP2 (via PDZ GRASP-type 1 domain) in respone to ER stress. Interacts with MARCHF2; the interaction leads to CFTR ubiqtuitination and degradation. Interacts with ADGRG2. Post-translationally, N-glycosylated. In terms of processing, phosphorylated; cAMP treatment promotes phosphorylation and activates the channel. Dephosphorylation decreases the ATPase activity (in vitro). Phosphorylation at PKA sites activates the channel. Phosphorylation at PKC sites enhances the response to phosphorylation by PKA. Phosphorylated by AMPK; this inhibits channel activity. Ubiquitinated, leading to its degradation in the lysosome. Deubiquitination by USP10 in early endosomes enhances its endocytic recycling to the cell membrane. Ubiquitinated by RNF185 during ER stress. Ubiquitinated by MARCHF2.

It localises to the apical cell membrane. It is found in the early endosome membrane. Its subcellular location is the cell membrane. The protein resides in the recycling endosome membrane. The protein localises to the endoplasmic reticulum membrane. It localises to the nucleus. It carries out the reaction ATP + H2O + closed Cl(-) channel = ADP + phosphate + open Cl(-) channel.. It catalyses the reaction chloride(in) = chloride(out). The enzyme catalyses hydrogencarbonate(in) = hydrogencarbonate(out). The catalysed reaction is ATP + H2O = ADP + phosphate + H(+). Epithelial ion channel that plays an important role in the regulation of epithelial ion and water transport and fluid homeostasis. Mediates the transport of chloride ions across the cell membrane. Possesses an intrinsic ATPase activity and utilizes ATP to gate its channel; the passive flow of anions through the channel is gated by cycles of ATP binding and hydrolysis by the ATP-binding domains. The ion channel is also permeable to HCO(3)(-); selectivity depends on the extracellular chloride concentration. Exerts its function also by modulating the activity of other ion channels and transporters. Contributes to the regulation of the pH and the ion content of the epithelial fluid layer. Modulates the activity of the epithelial sodium channel (ENaC) complex, in part by regulating the cell surface expression of the ENaC complex. May regulate bicarbonate secretion and salvage in epithelial cells by regulating the transporter SLC4A7. Can inhibit the chloride channel activity of ANO1. Plays a role in the chloride and bicarbonate homeostasis during sperm epididymal maturation and capacitation. The chain is Cystic fibrosis transmembrane conductance regulator from Papio anubis (Olive baboon).